The primary structure comprises 446 residues: Phosphoglucosamine mutase (446 aa).

Residue S99 is the Phosphoserine intermediate of the active site. The Mg(2+) site is built by S99, D242, D244, and D246. Phosphoserine is present on S99.

Belongs to the phosphohexose mutase family. Requires Mg(2+) as cofactor. Post-translationally, activated by phosphorylation.

The enzyme catalyses alpha-D-glucosamine 1-phosphate = D-glucosamine 6-phosphate. Catalyzes the conversion of glucosamine-6-phosphate to glucosamine-1-phosphate. The protein is Phosphoglucosamine mutase of Campylobacter curvus (strain 525.92).